The primary structure comprises 376 residues: Quinolinate synthase (376 aa).

2 residues coordinate iminosuccinate: His-57 and Ser-78. [4Fe-4S] cluster is bound at residue Cys-123. Iminosuccinate-binding positions include 149–151 and Ser-166; that span reads YAN. Cys-210 contributes to the [4Fe-4S] cluster binding site. Residues 236–238 and Thr-253 each bind iminosuccinate; that span reads HPE. Cys-307 contributes to the [4Fe-4S] cluster binding site.

This sequence belongs to the quinolinate synthase family. Type 1 subfamily. Requires [4Fe-4S] cluster as cofactor.

Its subcellular location is the cytoplasm. It catalyses the reaction iminosuccinate + dihydroxyacetone phosphate = quinolinate + phosphate + 2 H2O + H(+). Its pathway is cofactor biosynthesis; NAD(+) biosynthesis; quinolinate from iminoaspartate: step 1/1. In terms of biological role, catalyzes the condensation of iminoaspartate with dihydroxyacetone phosphate to form quinolinate. The polypeptide is Quinolinate synthase (Paraburkholderia phymatum (strain DSM 17167 / CIP 108236 / LMG 21445 / STM815) (Burkholderia phymatum)).